Here is a 1219-residue protein sequence, read N- to C-terminus: N-acetylglucosamine-1-phosphotransferase subunits alpha/beta (1219 aa).

Residues L27–V47 form a helical membrane-spanning segment. N88, N119, N153, N292, and N381 each carry an N-linked (GlcNAc...) asparagine glycan. Cystine bridges form between C443–C466, C457–C473, C508–C531, and C522–C538. 2 LNR repeats span residues C443–R478 and C508–C538. Residue D454 participates in Ca(2+) binding. N-linked (GlcNAc...) asparagine glycosylation occurs at N462. Positions 469, 472, 519, 534, and 537 each coordinate Ca(2+). 8 N-linked (GlcNAc...) asparagine glycosylation sites follow: N554, N610, N617, N645, N696, N726, N823, and N974. Residues E640–P666 are disordered. Residues N696 to R804 form the DMAP1-binding domain. The region spanning V970–L1005 is the EF-hand domain. Residues D983, D985, S987, and E994 each contribute to the Ca(2+) site. Residues N1021, N1029, and N1094 are each glycosylated (N-linked (GlcNAc...) asparagine). The chain crosses the membrane as a helical span at residues V1180–L1200.

The protein belongs to the stealth family. As to quaternary structure, hexamer of two alpha, two beta and two gamma (GNPTG) subunits; disulfide-linked. The alpha and/or the beta subunits of the enzyme constitute the catalytic subunits. Post-translationally, the alpha- and beta-subunits are generated by a proteolytic cleavage by mbtps1 protease at the Gln-893-Asp-894 bond.

The protein resides in the golgi apparatus membrane. It catalyses the reaction N(4)-[alpha-D-mannosyl-(1-&gt;2)-alpha-D-mannosyl-(glycan)]-L-asparaginyl-[protein] + UDP-N-acetyl-alpha-D-glucosamine = N(4)-[6-(N-acetyl-alpha-D-glucosaminyl-1-phospho)-alpha-D-mannosyl-(1-&gt;2)-alpha-D-mannosyl-(glycan)]-L-asparaginyl-[protein] + UMP + H(+). Its function is as follows. Catalyzes the formation of mannose 6-phosphate (M6P) markers on high mannose type oligosaccharides in the Golgi apparatus. M6P residues are required to bind to the M6P receptors (MPR), which mediate the vesicular transport of lysosomal enzymes to the endosomal/prelysosomal compartment. This is N-acetylglucosamine-1-phosphotransferase subunits alpha/beta (gnptab) from Danio rerio (Zebrafish).